The sequence spans 377 residues: Benzylmalonyl-CoA dehydrogenase (377 aa).

FAD contacts are provided by residues 123–132 (ICMTEPNAGS), 156–158 (WIT), R266, Q277, and 363–365 (TSE).

This sequence belongs to the acyl-CoA dehydrogenase family. Homotetramer. The cofactor is FAD.

It carries out the reaction (2-aminobenzyl)malonyl-CoA + O2 + H(+) = (E)-2-aminocinnamoyl-CoA + H2O2 + CO2. The catalysed reaction is benzylmalonyl-CoA + O2 + H(+) = (E)-cinnamoyl-CoA + H2O2 + CO2. Involved in degradation of indoleacetate, the most common member of the auxin class of plant hormones. Catalyzes the irreversible oxidative decarboxylation of (2-aminobenzyl)malonyl-CoA to 2-aminocinnamoyl-CoA and CO(2). In vitro, shows high catalytic efficiency with benzylmalonyl-CoA, a chemical analog of the physiological substrate, but otherwise accepts only a few medium-chain alkylmalonyl-CoA compounds as alternative substrates with low activities. The sequence is that of Benzylmalonyl-CoA dehydrogenase from Aromatoleum aromaticum (strain DSM 19018 / LMG 30748 / EbN1) (Azoarcus sp. (strain EbN1)).